Here is a 321-residue protein sequence, read N- to C-terminus: Mitochondrial coenzyme A transporter SLC25A42 (321 aa).

Solcar repeat units lie at residues 33–119 (RSVL…YKGI), 131–216 (LPPV…LKKT), and 226–314 (PFPY…TQIL). The next 6 membrane-spanning stretches (helical) occupy residues 35-55 (VLNS…AVAP), 91-111 (LWRG…IQFC), 137-154 (LLAG…TYPL), 191-208 (GFTP…LSFF), 232-252 (LVFG…LDVV), and 295-315 (VKGP…QILL).

This sequence belongs to the mitochondrial carrier (TC 2.A.29) family.

Its subcellular location is the mitochondrion inner membrane. The enzyme catalyses ADP(out) + CoA(in) = ADP(in) + CoA(out). It catalyses the reaction 3'-dephospho-CoA(in) + ADP(out) = 3'-dephospho-CoA(out) + ADP(in). The catalysed reaction is adenosine 3',5'-bisphosphate(in) + ADP(out) = adenosine 3',5'-bisphosphate(out) + ADP(in). It carries out the reaction AMP(in) + ADP(out) = AMP(out) + ADP(in). The enzyme catalyses dADP(in) + ADP(out) = dADP(out) + ADP(in). It catalyses the reaction ADP(in) + ATP(out) = ADP(out) + ATP(in). Mitochondrial carrier mediating the transport of coenzyme A (CoA) in mitochondria in exchange for intramitochondrial (deoxy)adenine nucleotides and adenosine 3',5'-diphosphate. This chain is Mitochondrial coenzyme A transporter SLC25A42 (slc25a42), found in Danio rerio (Zebrafish).